The chain runs to 296 residues: Class E basic helix-loop-helix protein 22 (296 aa).

The segment at 26–70 is disordered; it reads SAFRPPQGLDLSQPGDRSPLHCYDGPDPSDLLRHHQHHHQASSGA. One can recognise a bHLH domain in the interval 153–207; the sequence is TLRLNINARERRRMHDLNDALDELRAVIPYAHSPSVRKLSKIATLLLAKNYILMQ.

The protein resides in the nucleus. Its function is as follows. May act as a transcriptional repressor. The polypeptide is Class E basic helix-loop-helix protein 22 (bhlhe22) (Xenopus tropicalis (Western clawed frog)).